A 240-amino-acid polypeptide reads, in one-letter code: Ubiquinone biosynthesis O-methyltransferase (240 aa).

Residues Arg44, Gly64, Asp85, and Met129 each contribute to the S-adenosyl-L-methionine site.

This sequence belongs to the methyltransferase superfamily. UbiG/COQ3 family.

It catalyses the reaction a 3-demethylubiquinol + S-adenosyl-L-methionine = a ubiquinol + S-adenosyl-L-homocysteine + H(+). It carries out the reaction a 3-(all-trans-polyprenyl)benzene-1,2-diol + S-adenosyl-L-methionine = a 2-methoxy-6-(all-trans-polyprenyl)phenol + S-adenosyl-L-homocysteine + H(+). It functions in the pathway cofactor biosynthesis; ubiquinone biosynthesis. Functionally, O-methyltransferase that catalyzes the 2 O-methylation steps in the ubiquinone biosynthetic pathway. In Escherichia coli (strain SMS-3-5 / SECEC), this protein is Ubiquinone biosynthesis O-methyltransferase.